The primary structure comprises 350 residues: MPVLHNRISNDELKAKMLAESEPRTTISFYKYFTIASPQQTRDALYQVFTALDVFGRVYLAHEGINAQISVPQSKVETFRQQLYTFDPALDGLRLNIALEDDGKSFWVLRMKVRDRIVADGIDDPSFDASNVGDYLKAADVNVMLDDPDAVFIDMRNHYEYEVGHFENALEIPADTFREQLPKAVEMLREHADKKIVMYCTGGIRCEKASAWMKHNGFNKVWHIEGGIIEYARRAREQGLPVRFIGKNFVFDERMGERISDEVIAHCHQCGAPCDSHTNCKNDGCHLLFIQCPQCASKFNGCCSEQCCEELALPEEEQRRRRAGRENGNKIFNKSRGRLNSKLSIPDPAE.

The Rhodanese domain maps to 146-240 (DDPDAVFIDM…YARRAREQGL (95 aa)). The active-site Cysteine persulfide intermediate is the Cys200. Positions 319 to 328 (RRRRAGRENG) are enriched in basic and acidic residues. The disordered stretch occupies residues 319–350 (RRRRAGRENGNKIFNKSRGRLNSKLSIPDPAE).

It belongs to the TrhO family.

It catalyses the reaction uridine(34) in tRNA + AH2 + O2 = 5-hydroxyuridine(34) in tRNA + A + H2O. Catalyzes oxygen-dependent 5-hydroxyuridine (ho5U) modification at position 34 in tRNAs. The polypeptide is tRNA uridine(34) hydroxylase (Salmonella agona (strain SL483)).